Here is a 179-residue protein sequence, read N- to C-terminus: ATP synthase subunit delta (179 aa).

Belongs to the ATPase delta chain family. As to quaternary structure, F-type ATPases have 2 components, F(1) - the catalytic core - and F(0) - the membrane proton channel. F(1) has five subunits: alpha(3), beta(3), gamma(1), delta(1), epsilon(1). F(0) has three main subunits: a(1), b(2) and c(10-14). The alpha and beta chains form an alternating ring which encloses part of the gamma chain. F(1) is attached to F(0) by a central stalk formed by the gamma and epsilon chains, while a peripheral stalk is formed by the delta and b chains.

Its subcellular location is the cell inner membrane. F(1)F(0) ATP synthase produces ATP from ADP in the presence of a proton or sodium gradient. F-type ATPases consist of two structural domains, F(1) containing the extramembraneous catalytic core and F(0) containing the membrane proton channel, linked together by a central stalk and a peripheral stalk. During catalysis, ATP synthesis in the catalytic domain of F(1) is coupled via a rotary mechanism of the central stalk subunits to proton translocation. Its function is as follows. This protein is part of the stalk that links CF(0) to CF(1). It either transmits conformational changes from CF(0) to CF(1) or is implicated in proton conduction. The polypeptide is ATP synthase subunit delta (Thermosipho melanesiensis (strain DSM 12029 / CIP 104789 / BI429)).